We begin with the raw amino-acid sequence, 181 residues long: UPF0397 protein SUB0313 (181 aa).

The next 5 membrane-spanning stretches (helical) occupy residues 11-31, 45-65, 69-89, 114-134, and 147-167; these read AIGI…ITIF, LFSV…GHML, FAGY…GLGI, VQAL…DILI, and LFAA…LLIA.

This sequence belongs to the UPF0397 family.

It is found in the cell membrane. This is UPF0397 protein SUB0313 from Streptococcus uberis (strain ATCC BAA-854 / 0140J).